Reading from the N-terminus, the 123-residue chain is Large ribosomal subunit protein bL12 (123 aa).

The disordered stretch occupies residues 98–123; that stretch reads KEGVSKEEAEEIKSKLEDAGATVELK. Residues 100–115 show a composition bias toward basic and acidic residues; it reads GVSKEEAEEIKSKLED.

The protein belongs to the bacterial ribosomal protein bL12 family. As to quaternary structure, homodimer. Part of the ribosomal stalk of the 50S ribosomal subunit. Forms a multimeric L10(L12)X complex, where L10 forms an elongated spine to which 2 to 4 L12 dimers bind in a sequential fashion. Binds GTP-bound translation factors.

Forms part of the ribosomal stalk which helps the ribosome interact with GTP-bound translation factors. Is thus essential for accurate translation. The chain is Large ribosomal subunit protein bL12 from Halothermothrix orenii (strain H 168 / OCM 544 / DSM 9562).